A 912-amino-acid chain; its full sequence is Putative respiratory burst oxidase homolog protein J (912 aa).

Disordered stretches follow at residues 1–51 and 73–112; these read MKNN…GGGI and WRKS…RTTS. The Cytoplasmic segment spans residues 1–323; the sequence is MKNNKKVGTE…VVVTAELMYE (323 aa). Composition is skewed to polar residues over residues 29-44 and 78-87; these read SVKQ…NPES and NLGSPSTRKS. EF-hand-like regions lie at residues 147–155 and 181–193; these read AVDGRLPKD and RQIK…DKEQ. Residues 205 to 240 enclose the EF-hand domain; it reads DLDCRLQIFFDMCDKDGDGKLTEEEVKEVIVLSASA. The Ca(2+) site is built by Asp-218, Asp-220, Asp-222, Lys-224, and Glu-229. Position 294 is a phosphoserine (Ser-294). Residues 324-344 traverse the membrane as a helical segment; it reads HWKKIWVVTLWLAVNVVLFMW. The Extracellular segment spans residues 345–363; that stretch reads KYEEFTTSPLYNITGRCLC. The chain crosses the membrane as a helical span at residues 364–384; that stretch reads AAKGTAEILKLNMALILVPVL. One can recognise a Ferric oxidoreductase domain in the interval 366–523; the sequence is KGTAEILKLN…LLVIAYALLI (158 aa). Residues 385 to 410 are Cytoplasmic-facing; the sequence is RRTLTFLRSTFLNHLIPFDDNINFHK. A helical membrane pass occupies residues 411–431; sequence LIAVAIAVISLLHTALHMLCN. At 432–458 the chain is on the extracellular side; that stretch reads YPRLSSCPYNFYSDYAGNLLGAKQPTY. A helical membrane pass occupies residues 459–479; the sequence is LGLMLTPVSVTGVLMIIFMGI. Residues 480-510 lie on the Cytoplasmic side of the membrane; the sequence is SFTLAMHYFRRNIVKLPIPFNRLAGFNSFWY. The helical transmembrane segment at 511-531 threads the bilayer; it reads AHHLLVIAYALLIIHGYILII. Over 532–697 the chain is Extracellular; the sequence is EKPWYQKTTW…PYGAPAQSYQ (166 aa). The FAD-binding FR-type domain occupies 562 to 695; sequence EHNHRVHIIK…KGPYGAPAQS (134 aa). A helical transmembrane segment spans residues 698–718; the sequence is KFDILLLIGLGIGATPFISIL. Topologically, residues 719–912 are cytoplasmic; that stretch reads KDMLNNLKPG…TRFTFHKENF (194 aa).

Belongs to the RBOH (TC 5.B.1.3) family. Monomer and homodimer.

It localises to the membrane. Functionally, calcium-dependent NADPH oxidase that generates superoxide. The sequence is that of Putative respiratory burst oxidase homolog protein J (RBOHJ) from Arabidopsis thaliana (Mouse-ear cress).